A 376-amino-acid chain; its full sequence is Erythronate-4-phosphate dehydrogenase (376 aa).

Substrate contacts are provided by serine 45 and threonine 67. NAD(+) is bound at residue aspartate 147. The active site involves arginine 209. Position 233 (aspartate 233) interacts with NAD(+). Glutamate 238 is an active-site residue. Histidine 255 acts as the Proton donor in catalysis. Glycine 258 is a binding site for NAD(+). Tyrosine 259 lines the substrate pocket.

This sequence belongs to the D-isomer specific 2-hydroxyacid dehydrogenase family. PdxB subfamily. As to quaternary structure, homodimer.

It localises to the cytoplasm. The catalysed reaction is 4-phospho-D-erythronate + NAD(+) = (R)-3-hydroxy-2-oxo-4-phosphooxybutanoate + NADH + H(+). It participates in cofactor biosynthesis; pyridoxine 5'-phosphate biosynthesis; pyridoxine 5'-phosphate from D-erythrose 4-phosphate: step 2/5. Catalyzes the oxidation of erythronate-4-phosphate to 3-hydroxy-2-oxo-4-phosphonooxybutanoate. This Shewanella baltica (strain OS185) protein is Erythronate-4-phosphate dehydrogenase.